A 66-amino-acid chain; its full sequence is Large ribosomal subunit protein bL35 (66 aa).

The span at 1–16 (MPKQKTHRASAKRFKR) shows a compositional bias: basic residues. A disordered region spans residues 1-20 (MPKQKTHRASAKRFKRTGSG).

This sequence belongs to the bacterial ribosomal protein bL35 family.

This Streptococcus thermophilus (strain CNRZ 1066) protein is Large ribosomal subunit protein bL35.